The sequence spans 77 residues: MAKVCQVTGKKPMVGNNVSHAKNKTKRRFLPNLQNRRFWVESENRWISLRLTNAGLRVIDKNGIDAVLSDLRTRGEI.

Belongs to the bacterial ribosomal protein bL28 family.

This Polynucleobacter necessarius subsp. necessarius (strain STIR1) protein is Large ribosomal subunit protein bL28.